Reading from the N-terminus, the 728-residue chain is Protein Hook homolog 1 (728 aa).

Residue M1 is modified to N-acetylmethionine. The sufficient for interaction with microtubules stretch occupies residues M1–E555. One can recognise a Calponin-homology (CH) domain in the interval L12–A128. Coiled-coil stretches lie at residues P168–A443 and L477–R658. A Phosphoserine modification is found at S235. The interval Q481–Q510 is disordered. Residues L657–D728 are sufficient for interaction with AKTIP and VPS18. A phosphoserine mark is found at S719 and S727.

It belongs to the hook family. In terms of assembly, self-associates. Component of the FTS/Hook/FHIP complex (FHF complex), composed of AKTIP/FTS, FHIP1B, and one or more members of the Hook family of proteins HOOK1, HOOK2, and HOOK3. Interacts directly with AKTIP/FTS, HOOK2 and HOOK3. Associates with several subunits of the homotypic vesicular sorting complex (the HOPS complex) including VPS16, VPS18, VPS39 and VPS41; these interactions may be indirect. Interacts with CCDC181. Interacts (via coiled-coil region) with RIMBP3 (via C-terminus). Interacts with LRGUK (via guanylate kinase-like domain). Interacts with microtubules. May interacts with CLN3. Interacts with AP4M1; the interaction is direct, mediates the interaction between FTS-Hook-FHIP (FHF) complex and AP-4 and the perinuclear distribution of AP-4. In terms of tissue distribution, mainly expressed in testis.

It is found in the cytoplasm. It localises to the cytoskeleton. Its function is as follows. Component of the FTS/Hook/FHIP complex (FHF complex). The FHF complex may function to promote vesicle trafficking and/or fusion via the homotypic vesicular protein sorting complex (the HOPS complex). FHF complex promotes the distribution of AP-4 complex to the perinuclear area of the cell. Required for spermatid differentiation. Probably involved in the positioning of the microtubules of the manchette and the flagellum in relation to the membrane skeleton. The chain is Protein Hook homolog 1 (Hook1) from Mus musculus (Mouse).